The chain runs to 363 residues: 2,5-diketocamphane 1,2-monooxygenase 1 (363 aa).

Residues Met74 and 186–194 each bind FMN; that span reads TGLTKNSSS.

The protein belongs to the bacterial luciferase oxidoreductase family. In terms of assembly, homodimer. Likely forms a loose transient complex with a P.putida flavin reductase that provides the required FMNH(2) to the enzyme.

The catalysed reaction is (1R,4R)-bornane-2,5-dione + FMNH2 + O2 = (1R,4R)-5-oxo-1,2-campholide + FMN + H2O + H(+). The protein operates within terpene metabolism; (R)-camphor degradation. Its function is as follows. Involved in the degradation and assimilation of (+)-camphor, which allows P.putida strain NCIMB 10007 to grow on this enantiomer of camphor as the sole carbon source. Catalyzes the FMNH(2)-dependent lactonization of 2,5-diketocamphane via a Baeyer-Villiger oxidation to produce the unstable lactone 5-oxo-1,2-campholide with (R,R) configuration, that presumably undergoes spontaneous hydrolysis to form 2-oxo-Delta(3)-4,5,5-trimethylcyclopentenylacetate. Is also able to convert (+)-camphor and norcamphor to the corresponding lactone in vitro. Shows no conversion of (-)-camphor, (+)-fenchone, (-)-fenchone, and (+)-nopinone. Acts only on bicyclic ketones; is not active towards monocyclic ketones, aromatic ketones, the aliphatic 2-decanone, 1-indanone and progesterone. The protein is 2,5-diketocamphane 1,2-monooxygenase 1 of Pseudomonas putida (Arthrobacter siderocapsulatus).